The sequence spans 518 residues: Sensory neuron membrane protein 1 (518 aa).

The Cytoplasmic portion of the chain corresponds to 1–8 (MKTAEKLG). The helical transmembrane segment at 9-29 (IIGTTISIFGIGFGWGVFPWL) threads the bilayer. Topologically, residues 30 to 456 (IRMQIGRVSL…ELFRILQFLD (427 aa)) are extracellular. Residues asparagine 64, asparagine 186, asparagine 225, asparagine 316, asparagine 334, and asparagine 381 are each glycosylated (N-linked (GlcNAc...) asparagine). Cystine bridges form between cysteine 265/cysteine 330, cysteine 294/cysteine 349, and cysteine 332/cysteine 338. Residues 457-477 (VIKWVITLFGAGVVSGGVGLY) traverse the membrane as a helical segment. The Cytoplasmic portion of the chain corresponds to 478–518 (YKEKNSLPITPTSSATSKKIDNPTDKTTTHELGHTNFGYIN).

Belongs to the CD36 family.

It is found in the cell membrane. Its function is as follows. Plays an olfactory role that is not restricted to pheromone sensitivity. The chain is Sensory neuron membrane protein 1 from Pediculus humanus subsp. corporis (Body louse).